The sequence spans 269 residues: Dihydropteroate synthase (269 aa).

Residues 14–261 form the Pterin-binding domain; sequence TYIMGILNFT…DVLENSRAAK (248 aa). Asparagine 21 is a binding site for Mg(2+). (7,8-dihydropterin-6-yl)methyl diphosphate contacts are provided by residues threonine 61, aspartate 95, asparagine 114, aspartate 178, lysine 214, and 249-251; that span reads RVH.

The protein belongs to the DHPS family. It depends on Mg(2+) as a cofactor.

It carries out the reaction (7,8-dihydropterin-6-yl)methyl diphosphate + 4-aminobenzoate = 7,8-dihydropteroate + diphosphate. Its pathway is cofactor biosynthesis; tetrahydrofolate biosynthesis; 7,8-dihydrofolate from 2-amino-4-hydroxy-6-hydroxymethyl-7,8-dihydropteridine diphosphate and 4-aminobenzoate: step 1/2. In terms of biological role, catalyzes the condensation of para-aminobenzoate (pABA) with 6-hydroxymethyl-7,8-dihydropterin diphosphate (DHPt-PP) to form 7,8-dihydropteroate (H2Pte), the immediate precursor of folate derivatives. This Clostridium beijerinckii (strain ATCC 51743 / NCIMB 8052) (Clostridium acetobutylicum) protein is Dihydropteroate synthase.